A 387-amino-acid chain; its full sequence is 3-ketoacyl-CoA thiolase (387 aa).

Residue C91 is the Acyl-thioester intermediate of the active site. Catalysis depends on proton acceptor residues H343 and C373.

Belongs to the thiolase-like superfamily. Thiolase family. As to quaternary structure, heterotetramer of two alpha chains (FadB) and two beta chains (FadA).

It is found in the cytoplasm. The enzyme catalyses an acyl-CoA + acetyl-CoA = a 3-oxoacyl-CoA + CoA. The protein operates within lipid metabolism; fatty acid beta-oxidation. In terms of biological role, catalyzes the final step of fatty acid oxidation in which acetyl-CoA is released and the CoA ester of a fatty acid two carbons shorter is formed. The polypeptide is 3-ketoacyl-CoA thiolase (Shewanella oneidensis (strain ATCC 700550 / JCM 31522 / CIP 106686 / LMG 19005 / NCIMB 14063 / MR-1)).